Consider the following 181-residue polypeptide: Adenylate kinase (181 aa).

10–15 contributes to the ATP binding site; the sequence is GAGKGT. An NMP region spans residues 30–59; sequence STGELFRKNIQDGTKLGIEAKRYLDAGDLV. AMP contacts are provided by residues Thr31, Arg36, 57–59, 85–88, and Gln92; these read DLV and GYPR. The interval 126 to 132 is LID; it reads GRGRADD. Arg127 provides a ligand contact to ATP. Arg129 and Arg140 together coordinate AMP. Gly166 contributes to the ATP binding site.

It belongs to the adenylate kinase family. In terms of assembly, monomer.

The protein resides in the cytoplasm. It catalyses the reaction AMP + ATP = 2 ADP. The protein operates within purine metabolism; AMP biosynthesis via salvage pathway; AMP from ADP: step 1/1. Functionally, catalyzes the reversible transfer of the terminal phosphate group between ATP and AMP. Plays an important role in cellular energy homeostasis and in adenine nucleotide metabolism. This chain is Adenylate kinase, found in Mycobacterium marinum (strain ATCC BAA-535 / M).